The sequence spans 159 residues: Phosphopantetheine adenylyltransferase (159 aa).

Residue serine 9 coordinates substrate. Residues 9–10 and histidine 17 contribute to the ATP site; that span reads SF. Residues lysine 41, leucine 73, and lysine 87 each contribute to the substrate site. Residues 88-90, glutamate 98, and 123-129 each bind ATP; these read GLR and YSYLSSS.

The protein belongs to the bacterial CoaD family. Homohexamer. Mg(2+) serves as cofactor.

It localises to the cytoplasm. The enzyme catalyses (R)-4'-phosphopantetheine + ATP + H(+) = 3'-dephospho-CoA + diphosphate. Its pathway is cofactor biosynthesis; coenzyme A biosynthesis; CoA from (R)-pantothenate: step 4/5. Reversibly transfers an adenylyl group from ATP to 4'-phosphopantetheine, yielding dephospho-CoA (dPCoA) and pyrophosphate. This Clostridium botulinum (strain Alaska E43 / Type E3) protein is Phosphopantetheine adenylyltransferase.